Consider the following 175-residue polypeptide: Peptide deformylase (175 aa).

Residues C96 and H138 each coordinate Fe cation. E139 is an active-site residue. H142 lines the Fe cation pocket.

The protein belongs to the polypeptide deformylase family. Fe(2+) is required as a cofactor.

The enzyme catalyses N-terminal N-formyl-L-methionyl-[peptide] + H2O = N-terminal L-methionyl-[peptide] + formate. Removes the formyl group from the N-terminal Met of newly synthesized proteins. Requires at least a dipeptide for an efficient rate of reaction. N-terminal L-methionine is a prerequisite for activity but the enzyme has broad specificity at other positions. In Helicobacter pylori (strain Shi470), this protein is Peptide deformylase.